A 289-amino-acid polypeptide reads, in one-letter code: Probable porphobilinogen deaminase (289 aa).

An S-(dipyrrolylmethanemethyl)cysteine modification is found at C234.

Belongs to the HMBS family. It depends on dipyrromethane as a cofactor.

It carries out the reaction 4 porphobilinogen + H2O = hydroxymethylbilane + 4 NH4(+). Its pathway is porphyrin-containing compound metabolism; protoporphyrin-IX biosynthesis; coproporphyrinogen-III from 5-aminolevulinate: step 2/4. In terms of biological role, tetrapolymerization of the monopyrrole PBG into the hydroxymethylbilane pre-uroporphyrinogen in several discrete steps. The protein is Probable porphobilinogen deaminase (hemC) of Archaeoglobus fulgidus (strain ATCC 49558 / DSM 4304 / JCM 9628 / NBRC 100126 / VC-16).